The sequence spans 567 residues: Septation ring formation regulator EzrA (567 aa).

Residues 1–2 (MG) lie on the Extracellular side of the membrane. Residues 3-21 (MAWIVLLLGAGAIIYNHVY) traverse the membrane as a helical segment. Topologically, residues 22-567 (RKRMYREIDR…LWQEDNSREQ (546 aa)) are cytoplasmic. 2 coiled-coil regions span residues 98-159 (YRQA…AYRY) and 251-497 (HMER…IEQA).

This sequence belongs to the EzrA family.

Its subcellular location is the cell membrane. Negative regulator of FtsZ ring formation; modulates the frequency and position of FtsZ ring formation. Inhibits FtsZ ring formation at polar sites. Interacts either with FtsZ or with one of its binding partners to promote depolymerization. The protein is Septation ring formation regulator EzrA of Geobacillus kaustophilus (strain HTA426).